A 60-amino-acid polypeptide reads, in one-letter code: UPF0434 protein YcaR (60 aa).

Belongs to the UPF0434 family.

In Salmonella arizonae (strain ATCC BAA-731 / CDC346-86 / RSK2980), this protein is UPF0434 protein YcaR.